The primary structure comprises 400 residues: DNA polymerase IV (400 aa).

The region spanning 8–191 is the UmuC domain; it reads ILLCDANSFF…LPVRELFGIG (184 aa). 2 residues coordinate Mg(2+): aspartate 12 and aspartate 109. Residue glutamate 110 is part of the active site.

This sequence belongs to the DNA polymerase type-Y family. Monomer. It depends on Mg(2+) as a cofactor.

It localises to the cytoplasm. The enzyme catalyses DNA(n) + a 2'-deoxyribonucleoside 5'-triphosphate = DNA(n+1) + diphosphate. In terms of biological role, poorly processive, error-prone DNA polymerase involved in untargeted mutagenesis. Copies undamaged DNA at stalled replication forks, which arise in vivo from mismatched or misaligned primer ends. These misaligned primers can be extended by PolIV. Exhibits no 3'-5' exonuclease (proofreading) activity. May be involved in translesional synthesis, in conjunction with the beta clamp from PolIII. The chain is DNA polymerase IV from Moorella thermoacetica (strain ATCC 39073 / JCM 9320).